The sequence spans 338 residues: Nicotinate-nucleotide--dimethylbenzimidazole phosphoribosyltransferase (338 aa).

The active-site Proton acceptor is glutamate 305.

This sequence belongs to the CobT family.

It carries out the reaction 5,6-dimethylbenzimidazole + nicotinate beta-D-ribonucleotide = alpha-ribazole 5'-phosphate + nicotinate + H(+). Its pathway is nucleoside biosynthesis; alpha-ribazole biosynthesis; alpha-ribazole from 5,6-dimethylbenzimidazole: step 1/2. Functionally, catalyzes the synthesis of alpha-ribazole-5'-phosphate from nicotinate mononucleotide (NAMN) and 5,6-dimethylbenzimidazole (DMB). The sequence is that of Nicotinate-nucleotide--dimethylbenzimidazole phosphoribosyltransferase from Sinorhizobium medicae (strain WSM419) (Ensifer medicae).